Reading from the N-terminus, the 327-residue chain is Metapyrocatechase (327 aa).

VOC domains lie at 14–126 (QLAH…IFFE) and 156–276 (RLDH…LFGD). His159, His221, and Glu272 together coordinate Fe cation.

The protein belongs to the extradiol ring-cleavage dioxygenase family. It depends on Fe(2+) as a cofactor.

The catalysed reaction is catechol + O2 = (2Z,4E)-2-hydroxy-6-oxohexa-2,4-dienoate + H(+). The sequence is that of Metapyrocatechase (pheB) from Geobacillus stearothermophilus (Bacillus stearothermophilus).